A 172-amino-acid polypeptide reads, in one-letter code: Mesogenin-1 (172 aa).

The disordered stretch occupies residues 1 to 69 (METLHHPLVK…SPYSSSSHTQ (69 aa)). The segment covering 18–29 (SSDSEPNSSCMA) has biased composition (polar residues). Over residues 42 to 66 (SLSQTPSPQSLSPAVSYESPYSSSS) the composition is skewed to low complexity. Positions 108–162 (QRRRKASEREKLRMRAIAEALHTLRNNLPPMYSQGRQPLTKIQTLKCTINYISEL) constitute a bHLH domain.

It is found in the nucleus. In terms of biological role, involved in specifying the paraxial, but not dorsal, mesoderm. May regulate the expression of T-box transcription factors required for mesoderm formation and differentiation, such as brachyury T, wnt8, vegt and eomes. The chain is Mesogenin-1 (msgn1) from Xenopus tropicalis (Western clawed frog).